Consider the following 164-residue polypeptide: Endoribonuclease YbeY (164 aa).

Residues His130, His134, and His140 each coordinate Zn(2+).

It belongs to the endoribonuclease YbeY family. The cofactor is Zn(2+).

The protein localises to the cytoplasm. In terms of biological role, single strand-specific metallo-endoribonuclease involved in late-stage 70S ribosome quality control and in maturation of the 3' terminus of the 16S rRNA. The sequence is that of Endoribonuclease YbeY from Streptococcus mutans serotype c (strain ATCC 700610 / UA159).